The sequence spans 277 residues: Shikimate dehydrogenase (NADP(+)) (277 aa).

Residues 15–17 (SLS) and threonine 62 contribute to the shikimate site. Residue lysine 66 is the Proton acceptor of the active site. Residues asparagine 87 and aspartate 102 each contribute to the shikimate site. NADP(+) is bound by residues 127 to 131 (GAGGA), 151 to 156 (NRTVDK), and isoleucine 219. Shikimate is bound at residue tyrosine 221. Glycine 242 lines the NADP(+) pocket.

This sequence belongs to the shikimate dehydrogenase family. In terms of assembly, homodimer.

The enzyme catalyses shikimate + NADP(+) = 3-dehydroshikimate + NADPH + H(+). It functions in the pathway metabolic intermediate biosynthesis; chorismate biosynthesis; chorismate from D-erythrose 4-phosphate and phosphoenolpyruvate: step 4/7. Its function is as follows. Involved in the biosynthesis of the chorismate, which leads to the biosynthesis of aromatic amino acids. Catalyzes the reversible NADPH linked reduction of 3-dehydroshikimate (DHSA) to yield shikimate (SA). This is Shikimate dehydrogenase (NADP(+)) from Bacillus cereus (strain G9842).